A 260-amino-acid polypeptide reads, in one-letter code: MNRWAVPILHEHKHYYIVNKVHGIVCQPPDLRTWYKYHDYEPPVLLDLLRKQHPNFGGEVWRTVHRLDEPVTGGVLVSRNKRAAAMFSRSLALGGNRGFPLTRRYVALLAREAKGLPSEGRITMGDMITDYKRLENDLVLLQLQTGRKHQIRKQMAQVFGQPVVNDKMYGGDSVDGIVDNLIGLHSAFIGAQCGLQARTYLIPIPRTQDAFKLWDKYIDEQGGFIPSVQKELRDFSLPSKLENTITLLSGGQGGIQISYK.

Residue Asp-68 is part of the active site.

The protein belongs to the pseudouridine synthase RluA family.

Its subcellular location is the mitochondrion. The enzyme catalyses uridine(2819) in 21S rRNA = pseudouridine(2819) in 21S rRNA. Functionally, pseudouridylate synthase responsible for the pseudouridine-2819 formation in mitochondrial 21S rRNA. May modulate the efficiency or the fidelity of the mitochondrial translation machinery. The polypeptide is 21S rRNA pseudouridine(2819) synthase (PUS5) (Eremothecium gossypii (strain ATCC 10895 / CBS 109.51 / FGSC 9923 / NRRL Y-1056) (Yeast)).